A 334-amino-acid chain; its full sequence is 6-phosphogluconolactonase (334 aa).

The protein belongs to the cycloisomerase 2 family.

The catalysed reaction is 6-phospho-D-glucono-1,5-lactone + H2O = 6-phospho-D-gluconate + H(+). The protein operates within carbohydrate degradation; pentose phosphate pathway; D-ribulose 5-phosphate from D-glucose 6-phosphate (oxidative stage): step 2/3. Catalyzes the hydrolysis of 6-phosphogluconolactone to 6-phosphogluconate. This is 6-phosphogluconolactonase from Yersinia pseudotuberculosis serotype O:1b (strain IP 31758).